The chain runs to 76 residues: uncharacterized protein (76 aa).

Transmembrane regions (helical) follow at residues 2–22, 28–48, and 56–76; these read LKVA…YSLF, LLIV…VEAI, and EYLL…KFII.

The protein resides in the cell membrane. This is an uncharacterized protein from Bacillus subtilis (strain 168).